The chain runs to 273 residues: MADTQAMASDRGVAVTLPQKRYYRQRAHSNPMADHTFQYPVKPEVMDWSEYYPEFFKPLVPDCAHDDAKDLQERKEQHQVEFADVGCGYGGLLVALSPLFPNTLMLGLEIRVKVSDYVQDRIKSLRASHLGQYQNIACIRSNAMKYLPNFFKKGQLSKMFFLFPDPHFKKTKHKWRIISPTLLAEYSYALRVGGMVYTITDVEEVHEWMVKHFTEHPLFERVEKEELVSDIIVDKLGTSTEEGKKVQRNKGQNFLAVFRRIENRTFIQRDSQQ.

The S-adenosyl-L-methionine site is built by Gly-86, Glu-109, Arg-111, Asn-142, Ala-143, and Leu-162. Asp-165 is an active-site residue. An alphaC helix region spans residues 166-174 (PHFKKTKHK). Positions 240 and 242 each coordinate S-adenosyl-L-methionine. An alpha6 helix region spans residues 240–248 (TEEGKKVQR).

The protein belongs to the class I-like SAM-binding methyltransferase superfamily. TrmB family. As to quaternary structure, catalytic component of the METTL1-WDR4 complex, composed of mettl1 and wdr4.

The protein localises to the nucleus. The enzyme catalyses guanosine(46) in tRNA + S-adenosyl-L-methionine = N(7)-methylguanosine(46) in tRNA + S-adenosyl-L-homocysteine. It catalyses the reaction a guanosine in mRNA + S-adenosyl-L-methionine = an N(7)-methylguanosine in mRNA + S-adenosyl-L-homocysteine. It carries out the reaction a guanosine in miRNA + S-adenosyl-L-methionine = an N(7)-methylguanosine in miRNA + S-adenosyl-L-homocysteine. The protein operates within tRNA modification; N(7)-methylguanine-tRNA biosynthesis. Functionally, catalytic component of METTL1-WDR4 methyltransferase complex that mediates the formation of N(7)-methylguanine in a subset of RNA species, such as tRNAs, mRNAs and microRNAs (miRNAs). Catalyzes the formation of N(7)-methylguanine at position 46 (m7G46) in a large subset of tRNAs that contain the 5'-RAGGU-3' motif within the variable loop. M7G46 interacts with C13-G22 in the D-loop to stabilize tRNA tertiary structure and protect tRNAs from decay. Also acts as a methyltransferase for a subset of internal N(7)-methylguanine in mRNAs. Internal N(7)-methylguanine methylation of mRNAs in response to stress promotes their relocalization to stress granules, thereby suppressing their translation. Also methylates a specific subset of miRNAs. In Xenopus laevis (African clawed frog), this protein is tRNA (guanine-N(7)-)-methyltransferase (mettl1).